Reading from the N-terminus, the 356-residue chain is MSRYWSDIVRQLEPYVPGEQPALAHPVKLNTNENPYPPSPRALDAIRRELGDTGEALRRYPDPVARRLRETVAAYHGIAPEQVFAGNGSDEVLAHAFQALLQHDRPLRFPDITYSFYPTYARLYRVAYETVPLAGDFSIVVDDYLDDAGCVLFPNPNAPTGRALPLADIERIVAANPSSVVVIDEAYVDFGAESAVSLIARYPNLLVVHTVSKARSLAGMRVGFAFGDAALIDALTRVKDSFNSYPLDRLAQVATQASYEDEAWFQATRKQVIASRERLVGALAALGFDVVPSAANFVFARPRSHDAATLAAQLKQREIFVRHFKLPRIDQHLRITVGSDAECDALVAALRELLAA.

The residue at position 213 (K213) is an N6-(pyridoxal phosphate)lysine.

The protein belongs to the class-II pyridoxal-phosphate-dependent aminotransferase family. Histidinol-phosphate aminotransferase subfamily. As to quaternary structure, homodimer. The cofactor is pyridoxal 5'-phosphate.

The catalysed reaction is L-histidinol phosphate + 2-oxoglutarate = 3-(imidazol-4-yl)-2-oxopropyl phosphate + L-glutamate. It participates in amino-acid biosynthesis; L-histidine biosynthesis; L-histidine from 5-phospho-alpha-D-ribose 1-diphosphate: step 7/9. The sequence is that of Histidinol-phosphate aminotransferase 2 from Burkholderia mallei (strain ATCC 23344).